Reading from the N-terminus, the 264-residue chain is Ribonuclease HII (264 aa).

The RNase H type-2 domain occupies 33-224; the sequence is GPVAGVDEVG…VRRVASGSNT (192 aa). Positions 39, 40, and 133 each coordinate a divalent metal cation. Residues 222–264 are disordered; the sequence is SNTAEVADGQPDPRDGTAQTGEGRWSKSSHPATMRATGRAQGT.

It belongs to the RNase HII family. It depends on Mn(2+) as a cofactor. Mg(2+) is required as a cofactor.

It is found in the cytoplasm. The catalysed reaction is Endonucleolytic cleavage to 5'-phosphomonoester.. Its function is as follows. Endonuclease that specifically degrades the RNA of RNA-DNA hybrids. The protein is Ribonuclease HII of Mycobacterium bovis (strain ATCC BAA-935 / AF2122/97).